We begin with the raw amino-acid sequence, 501 residues long: Aspartate--tRNA ligase, cytoplasmic (501 aa).

Phosphothreonine is present on threonine 52. Lysine 74 is modified (N6-acetyllysine). L-aspartate is bound at residue glutamate 229. Position 249 is a phosphoserine (serine 249). The segment at 251 to 254 is aspartate; it reads QLYK. Residue arginine 273 coordinates L-aspartate. ATP is bound by residues 273–275 and 281–283; these read RAE and RHL. Lysine 374 carries the post-translational modification N6-acetyllysine. Residues 411–415 are binding site for the 3'-end of tRNA; that stretch reads KQSNS. Glutamate 424 provides a ligand contact to ATP. The L-aspartate site is built by serine 427 and arginine 431. Position 472-475 (472-475) interacts with ATP; sequence GLER. At threonine 500 the chain carries Phosphothreonine; by PKA.

This sequence belongs to the class-II aminoacyl-tRNA synthetase family. Type 2 subfamily. As to quaternary structure, homodimer. Part of a multisubunit complex that groups tRNA ligases for Arg (RARS1), Asp (DARS1), Gln (QARS1), Ile (IARS1), Leu (LARS1), Lys (KARS1), Met (MARS1) the bifunctional ligase for Glu and Pro (EPRS1) and the auxiliary subunits AIMP1/p43, AIMP2/p38 and EEF1E1/p18.

It localises to the cytoplasm. The catalysed reaction is tRNA(Asp) + L-aspartate + ATP = L-aspartyl-tRNA(Asp) + AMP + diphosphate. Catalyzes the specific attachment of an amino acid to its cognate tRNA in a 2 step reaction: the amino acid (AA) is first activated by ATP to form AA-AMP and then transferred to the acceptor end of the tRNA. This Bos taurus (Bovine) protein is Aspartate--tRNA ligase, cytoplasmic (DARS1).